Here is a 465-residue protein sequence, read N- to C-terminus: MLPLVALVGRPNVGKSTIFNALTRTRDALVHDQPGVTRDRNYGVCRLDEQQPFIVVDTGGIAGDEEGLAGATARQARAAAGEADLVLFVVDGREGASSLDDEILAWLRKLARPTVLVINKIDGTDEETVRSEFARYGFSDVVALSAAHRQGIDELLDEVGARLPEEGAGELLDNDPARVRIAFVGRPNVGKSTLVNRLLGEERMIASEVPGTTRDSIAVDLERDGRQYRLIDTAGLRRRGKVEEAVEKFSAFKTLQAIEQCQVAVLMLDATEGVTDQDATILGAILDAGRALVVAINKWDGQSDYQRAQAEDLLSRKLGFVNWAEAVRISALHGSGMRELFQAIHRAHASATHEFSTSEVNQALEIAYETNPPPSIRGHVSKLRYVHPGGANPPTFIVHGTRLKVLPESYKRYLENFFRKRFKLVGTPVRFIFREGANPYEGKKNPLSDRQVARKRRLMRHVKGK.

EngA-type G domains are found at residues 3–167 and 179–352; these read PLVA…PEEG and VRIA…ASAT. GTP is bound by residues 9-16, 57-61, 119-122, 185-192, 232-236, and 297-300; these read GRPNVGKS, DTGGI, NKID, DTAGL, and NKWD. A KH-like domain is found at 353 to 437; sequence HEFSTSEVNQ…PVRFIFREGA (85 aa).

It belongs to the TRAFAC class TrmE-Era-EngA-EngB-Septin-like GTPase superfamily. EngA (Der) GTPase family. As to quaternary structure, associates with the 50S ribosomal subunit.

Its function is as follows. GTPase that plays an essential role in the late steps of ribosome biogenesis. The sequence is that of GTPase Der from Xanthomonas axonopodis pv. citri (strain 306).